Here is a 297-residue protein sequence, read N- to C-terminus: Coatomer subunit epsilon-2 (297 aa).

Belongs to the COPE family. Oligomeric complex that consists of at least the alpha, beta, beta', gamma, delta, epsilon and zeta subunits.

It is found in the cytoplasm. It localises to the golgi apparatus membrane. The protein resides in the cytoplasmic vesicle. Its subcellular location is the COPI-coated vesicle membrane. Functionally, the coatomer is a cytosolic protein complex that binds to dilysine motifs and reversibly associates with Golgi non-clathrin-coated vesicles, which further mediate biosynthetic protein transport from the ER, via the Golgi up to the trans Golgi network. The coatomer complex is required for budding from Golgi membranes, and is essential for the retrograde Golgi-to-ER transport of dilysine-tagged proteins. This Oryza sativa subsp. indica (Rice) protein is Coatomer subunit epsilon-2.